A 210-amino-acid polypeptide reads, in one-letter code: Putative fructokinase-8 (210 aa).

This sequence belongs to the carbohydrate kinase PfkB family.

The enzyme catalyses D-fructose + ATP = D-fructose 6-phosphate + ADP + H(+). It participates in glycan biosynthesis; starch biosynthesis. May play an important role in maintaining the flux of carbon towards starch formation. The polypeptide is Putative fructokinase-8 (Arabidopsis thaliana (Mouse-ear cress)).